We begin with the raw amino-acid sequence, 361 residues long: MDKYELVKDIGAGNFGVARLMRVKNSKELVAMKYIERGPKIDENVAREIINHRSLRHPNIIRFKEVVLTPTHIAIAMEYAAGGELFERICSAGRFSEDEARYFFQQLISGVSYCHAMQICHRDLKLENTLLDGSPAPRLKICDFGYSKSSLLHSMPKSTVGTPAYIAPEVLSRGEYDGKMADVWSCGVTLYVMLVGAYPFEDQEDPKNFKKTIQRIMAVKYKIPDYVHISQDCKHLLSRIFVTNSNKRITIGDIKKHPWFLKNLPRELTEIAQAAYFRKENPTFSLQSVEEIMKIVEEAKTPARVSRSIGAFGWGGGEDAEGKEEDAEEEVEEVEEEEDEEDEYDKTVKQVHASMGEVRVS.

A Protein kinase domain is found at 4–260 (YELVKDIGAG…IGDIKKHPWF (257 aa)). ATP is bound by residues 10–18 (IGAGNFGVA) and Lys-33. The active-site Proton acceptor is the Asp-123. Ser-154 carries the post-translational modification Phosphoserine. The interval 311–361 (AFGWGGGEDAEGKEEDAEEEVEEVEEEEDEEDEYDKTVKQVHASMGEVRVS) is disordered. The span at 318-344 (EDAEGKEEDAEEEVEEVEEEEDEEDEY) shows a compositional bias: acidic residues.

It belongs to the protein kinase superfamily. Ser/Thr protein kinase family. Expressed in seedlings.

The enzyme catalyses L-seryl-[protein] + ATP = O-phospho-L-seryl-[protein] + ADP + H(+). It catalyses the reaction L-threonyl-[protein] + ATP = O-phospho-L-threonyl-[protein] + ADP + H(+). The polypeptide is Serine/threonine-protein kinase SRK2B (SRK2B) (Arabidopsis thaliana (Mouse-ear cress)).